Consider the following 167-residue polypeptide: MCWRPLCRFLWLWSYLSYVQAVPIHKVQDDTKTLIKTIVTRINDISHTQSVSARQRVTGLDFIPGLHPILSLSKMDQTLAVYQQILTSLPSQNVLQIAHDLENLRDLLHLLAFSKSCSLPQTRGLQKPESLDGVLEASLYSTEVVALSRLQGSLQDILQQLDLSPEC.

Positions 1–21 (MCWRPLCRFLWLWSYLSYVQA) are cleaved as a signal peptide. An intrachain disulfide couples cysteine 117 to cysteine 167.

This sequence belongs to the leptin family.

The protein localises to the secreted. Key player in the regulation of energy balance and body weight control. Once released into the circulation, has central and peripheral effects by binding LEPR, found in many tissues, which results in the activation of several major signaling pathways. In the hypothalamus, acts as an appetite-regulating factor that induces a decrease in food intake and an increase in energy consumption by inducing anorexinogenic factors and suppressing orexigenic neuropeptides, also regulates bone mass and secretion of hypothalamo-pituitary-adrenal hormones. In the periphery, increases basal metabolism, influences reproductive function, regulates pancreatic beta-cell function and insulin secretion, is pro-angiogenic for endothelial cell and affects innate and adaptive immunity. In the arcuate nucleus of the hypothalamus, activates by depolarization POMC neurons inducing FOS and SOCS3 expression to release anorexigenic peptides and inhibits by hyperpolarization NPY neurons inducing SOCS3 with a consequent reduction on release of orexigenic peptides. In addition to its known satiety inducing effect, has a modulatory role in nutrient absorption. In the intestine, reduces glucose absorption by enterocytes by activating PKC and leading to a sequential activation of p38, PI3K and ERK signaling pathways which exerts an inhibitory effect on glucose absorption. Acts as a growth factor on certain tissues, through the activation of different signaling pathways increases expression of genes involved in cell cycle regulation such as CCND1, via JAK2-STAT3 pathway, or VEGFA, via MAPK1/3 and PI3K-AKT1 pathways. May also play an apoptotic role via JAK2-STAT3 pathway and up-regulation of BIRC5 expression. Pro-angiogenic, has mitogenic activity on vascular endothelial cells and plays a role in matrix remodeling by regulating the expression of matrix metalloproteinases (MMPs) and tissue inhibitors of metalloproteinases (TIMPs). In innate immunity, modulates the activity and function of neutrophils by increasing chemotaxis and the secretion of oxygen radicals. Increases phagocytosis by macrophages and enhances secretion of pro-inflammatory mediators. Increases cytotoxic ability of NK cells. Plays a pro-inflammatory role, in synergy with IL1B, by inducing NOS2 which promotes the production of IL6, IL8 and Prostaglandin E2, through a signaling pathway that involves JAK2, PI3K, MAP2K1/MEK1 and MAPK14/p38. In adaptive immunity, promotes the switch of memory T-cells towards T helper-1 cell immune responses. Increases CD4(+)CD25(-) T-cell proliferation and reduces autophagy during TCR (T-cell receptor) stimulation, through MTOR signaling pathway activation and BCL2 up-regulation. The polypeptide is Leptin (Lep) (Rattus norvegicus (Rat)).